A 196-amino-acid polypeptide reads, in one-letter code: Segregation and condensation protein B (196 aa).

Belongs to the ScpB family. Homodimer. Homodimerization may be required to stabilize the binding of ScpA to the Smc head domains. Component of a cohesin-like complex composed of ScpA, ScpB and the Smc homodimer, in which ScpA and ScpB bind to the head domain of Smc. The presence of the three proteins is required for the association of the complex with DNA.

It is found in the cytoplasm. Its function is as follows. Participates in chromosomal partition during cell division. May act via the formation of a condensin-like complex containing Smc and ScpA that pull DNA away from mid-cell into both cell halves. In Lactobacillus johnsonii (strain CNCM I-12250 / La1 / NCC 533), this protein is Segregation and condensation protein B.